Here is a 610-residue protein sequence, read N- to C-terminus: Replication factor C large subunit (610 aa).

Position 55-62 (55-62 (GPAGIGKT)) interacts with ATP. Composition is skewed to basic and acidic residues over residues 467–478 (EKEGNASAEKPE), 502–515 (LPEK…KLPE), and 594–603 (DGSKKAEPKN). The disordered stretch occupies residues 467–610 (EKEGNASAEK…PKNQKTLFDF (144 aa)).

Belongs to the activator 1 small subunits family. RfcL subfamily. Heteromultimer composed of small subunits (RfcS) and large subunits (RfcL).

In terms of biological role, part of the RFC clamp loader complex which loads the PCNA sliding clamp onto DNA. The protein is Replication factor C large subunit of Methanosarcina mazei (strain ATCC BAA-159 / DSM 3647 / Goe1 / Go1 / JCM 11833 / OCM 88) (Methanosarcina frisia).